A 191-amino-acid chain; its full sequence is Lipid A 1-phosphatase (191 aa).

5 helical membrane passes run 22-42 (LLALSLGLILLGVFIPFPKVP), 60-80 (FIPTILSVAIPLIQRDAVGLF), 117-137 (GNFNMPSGHSSMVGLAVAFLM), 145-162 (YLWLLPLIPLTMLARIYL), and 164-184 (MHTIGAVLAGLGTGMLCVGLF).

It belongs to the lipid A LpxE 1-phosphatase family.

The protein resides in the cell inner membrane. The protein operates within bacterial outer membrane biogenesis; LPS lipid A biosynthesis. In terms of biological role, removes the 1-phosphate group from tetra- and probably hexaacylated lipid A species. Absence of the 1-phosphate group renders the bacteria partially resistant to host-derived cationic antimicrobial peptides (CAMP), allowing it to camouflage itself from the host innate immune response, and plays a role in the long-term colonization of the host's stomach. In Helicobacter pylori (strain J99 / ATCC 700824) (Campylobacter pylori J99), this protein is Lipid A 1-phosphatase.